The following is a 295-amino-acid chain: Pyridoxal 5'-phosphate synthase subunit PdxS (295 aa).

Residue aspartate 25 participates in D-ribose 5-phosphate binding. The Schiff-base intermediate with D-ribose 5-phosphate role is filled by lysine 82. Glycine 154 contacts D-ribose 5-phosphate. A D-glyceraldehyde 3-phosphate-binding site is contributed by arginine 166. D-ribose 5-phosphate contacts are provided by residues glycine 215 and 236-237 (GS).

It belongs to the PdxS/SNZ family. In terms of assembly, in the presence of PdxT, forms a dodecamer of heterodimers.

The enzyme catalyses aldehydo-D-ribose 5-phosphate + D-glyceraldehyde 3-phosphate + L-glutamine = pyridoxal 5'-phosphate + L-glutamate + phosphate + 3 H2O + H(+). Its pathway is cofactor biosynthesis; pyridoxal 5'-phosphate biosynthesis. Functionally, catalyzes the formation of pyridoxal 5'-phosphate from ribose 5-phosphate (RBP), glyceraldehyde 3-phosphate (G3P) and ammonia. The ammonia is provided by the PdxT subunit. Can also use ribulose 5-phosphate and dihydroxyacetone phosphate as substrates, resulting from enzyme-catalyzed isomerization of RBP and G3P, respectively. This Macrococcus caseolyticus (strain JCSC5402) (Macrococcoides caseolyticum) protein is Pyridoxal 5'-phosphate synthase subunit PdxS.